Consider the following 493-residue polypeptide: 3-octaprenyl-4-hydroxybenzoate carboxy-lyase (493 aa).

Mn(2+) is bound at residue Asn-172. Prenylated FMN-binding positions include Ile-175–Arg-177, Arg-189–Leu-191, and Arg-194–Gly-195. Position 238 (Glu-238) interacts with Mn(2+). Asp-287 serves as the catalytic Proton donor.

The protein belongs to the UbiD family. In terms of assembly, homohexamer. Prenylated FMN serves as cofactor. It depends on Mn(2+) as a cofactor.

It localises to the cell membrane. The catalysed reaction is a 4-hydroxy-3-(all-trans-polyprenyl)benzoate + H(+) = a 2-(all-trans-polyprenyl)phenol + CO2. Its pathway is cofactor biosynthesis; ubiquinone biosynthesis. Functionally, catalyzes the decarboxylation of 3-octaprenyl-4-hydroxy benzoate to 2-octaprenylphenol, an intermediate step in ubiquinone biosynthesis. The sequence is that of 3-octaprenyl-4-hydroxybenzoate carboxy-lyase from Cellvibrio japonicus (strain Ueda107) (Pseudomonas fluorescens subsp. cellulosa).